Reading from the N-terminus, the 721-residue chain is Ribonucleoside-diphosphate reductase subunit alpha (721 aa).

Substrate-binding positions include Thr-168, 184–185 (SC), Gly-213, 393–397 (NLCSE), and 595–599 (PTGSI). The cysteines at positions 185 and 422 are disulfide-linked. Catalysis depends on Asn-393, which acts as the Proton acceptor. Cys-395 acts as the Cysteine radical intermediate in catalysis. Glu-397 serves as the catalytic Proton acceptor.

This sequence belongs to the ribonucleoside diphosphate reductase large chain family. As to quaternary structure, tetramer of two alpha and two beta subunits.

The catalysed reaction is a 2'-deoxyribonucleoside 5'-diphosphate + [thioredoxin]-disulfide + H2O = a ribonucleoside 5'-diphosphate + [thioredoxin]-dithiol. With respect to regulation, under complex allosteric control mediated by deoxynucleoside triphosphates and ATP binding. The type of nucleotide bound at the specificity site determines substrate preference. It seems probable that ATP makes the enzyme reduce CDP and UDP, dGTP favors ADP reduction and dTTP favors GDP reduction. Functionally, provides the precursors necessary for DNA synthesis. Catalyzes the biosynthesis of deoxyribonucleotides from the corresponding ribonucleotides. The sequence is that of Ribonucleoside-diphosphate reductase subunit alpha (nrdE) from Mycobacterium leprae (strain TN).